The chain runs to 127 residues: DNA-directed RNA polymerase subunit omega (127 aa).

This sequence belongs to the RNA polymerase subunit omega family. As to quaternary structure, the RNAP catalytic core consists of 2 alpha, 1 beta, 1 beta' and 1 omega subunit. When a sigma factor is associated with the core the holoenzyme is formed, which can initiate transcription.

It catalyses the reaction RNA(n) + a ribonucleoside 5'-triphosphate = RNA(n+1) + diphosphate. Functionally, promotes RNA polymerase assembly. Latches the N- and C-terminal regions of the beta' subunit thereby facilitating its interaction with the beta and alpha subunits. This chain is DNA-directed RNA polymerase subunit omega, found in Rickettsia canadensis (strain McKiel).